A 373-amino-acid chain; its full sequence is 4-hydroxy-3-methylbut-2-en-1-yl diphosphate synthase (flavodoxin) (373 aa).

Residues cysteine 270, cysteine 273, cysteine 305, and glutamate 312 each coordinate [4Fe-4S] cluster.

Belongs to the IspG family. It depends on [4Fe-4S] cluster as a cofactor.

The enzyme catalyses (2E)-4-hydroxy-3-methylbut-2-enyl diphosphate + oxidized [flavodoxin] + H2O + 2 H(+) = 2-C-methyl-D-erythritol 2,4-cyclic diphosphate + reduced [flavodoxin]. It participates in isoprenoid biosynthesis; isopentenyl diphosphate biosynthesis via DXP pathway; isopentenyl diphosphate from 1-deoxy-D-xylulose 5-phosphate: step 5/6. Functionally, converts 2C-methyl-D-erythritol 2,4-cyclodiphosphate (ME-2,4cPP) into 1-hydroxy-2-methyl-2-(E)-butenyl 4-diphosphate. The protein is 4-hydroxy-3-methylbut-2-en-1-yl diphosphate synthase (flavodoxin) of Pectobacterium carotovorum subsp. carotovorum (strain PC1).